An 875-amino-acid chain; its full sequence is MLLQFLLLSLCVSVATAKVITGVFNSFNSLTWANAASYPYRGPATPTWTAVIGWSLDGATASAGDTFTLDMPCVFKFITDQTSIDLVADGRTYATCNLNSAEEFTTFSSVSCTVTTTMTADTKAIGTVTLPFSFSVGGSGSDVDLANSQCFTAGINTVTFNDGDTSISTTVDFEKSTVASSDRILLSRILPSLSQAVNLFLPQECANGYTSGTMGFSTAGTGATIDCSTVHVGISNGLNDWNYPISSESFSYTKTCTSTSVLVTFQNVPAGYRPFVDAYISATRVSSYTMQYTNIYACVGAASVDDSFTHTWRGYSNSQAGSNGITIVVTTRTVTDSTTAVTTLPFNSDTDKTKTIEILQPIPTTTITTSYVGVTTSYSTKTAPIGETATVIVDVPYHTTTTVTSEWTGTITTTTTRTNPTDSIDTVVVQVPSPNPTVTTTEYWSQSYATTTTVTAPPGGTDSVIIREPPNPTVTTTEYWSQSYATTLTITAPPGGTNSVIIRVHSSTNDESSESTFSTLSVPSFSGSISIVSTVSRPHYVNSTVTHLPSSSSKPVDIPSSDVVTSTNDNSLTSLTGSENGKTSVAISTTFCDDENGCQTSIPQGSVVRTTATTTATTTTIIGDNNGSGKSKSGELSSTGSVTTNTATPDVPSTKVPSNPGAPGTGVPPPLAPSTETQTTNNVPGSPNIPATGTTDIRESTTVSHTVTGNGNTGVPMNPNPALTTSTSLTGATNSATNPSHETGVNTGSGGSTNIVTPPSSATATVVIPGTDNGATTKGQDTAGGGNSNGSTATTNIQGGNNEPGNQPGTNTTGEPVGTTDTQSVESISQPTTLSQQTTSSLISTPLASTFDGSGSIVQHSAWLYVLLTAISIFF.

An N-terminal signal peptide occupies residues 1-17 (MLLQFLLLSLCVSVATA). Disulfide bonds link C73-C150, C96-C112, C205-C298, and C227-C256. 4 ALS repeats span residues 365–396 (TTIT…VDVP), 401–432 (TTVT…VQVP), 438–469 (VTTT…IREP), and 474–502 (VTTT…SVII). An N-linked (GlcNAc...) asparagine glycan is attached at N542. Disordered stretches follow at residues 546–580 (THLP…GSEN) and 619–837 (TTII…LSQQ). A compositionally biased stretch (low complexity) spans 549–578 (PSSSSKPVDIPSSDVVTSTNDNSLTSLTGS). N-linked (GlcNAc...) asparagine glycosylation occurs at N626. A compositionally biased stretch (low complexity) spans 627–641 (GSGKSKSGELSSTGS). The span at 674 to 715 (STETQTTNNVPGSPNIPATGTTDIRESTTVSHTVTGNGNTGV) shows a compositional bias: polar residues. The segment covering 722–746 (ALTTSTSLTGATNSATNPSHETGVN) has biased composition (low complexity). A compositionally biased stretch (polar residues) spans 755 to 764 (IVTPPSSATA). Residues N789 and N811 are each glycosylated (N-linked (GlcNAc...) asparagine). Low complexity-rich tracts occupy residues 789–816 (NGST…TGEP) and 827–837 (SISQPTTLSQQ). D852 carries the GPI-anchor amidated aspartate lipid modification. The propeptide at 853 to 875 (GSGSIVQHSAWLYVLLTAISIFF) is removed in mature form.

This sequence belongs to the ALS family. N-glycosylated and O-glycosylated.

Its subcellular location is the cell membrane. The protein localises to the secreted. The protein resides in the cell wall. In terms of biological role, cell surface adhesion protein which mediates both yeast-to-host tissue adherence and yeast aggregation. Plays an important role in the pathogenesis of C.albicans infections. The sequence is that of Agglutinin-like protein 4 (ALS4) from Candida albicans (Yeast).